Here is a 222-residue protein sequence, read N- to C-terminus: MSQTKMLKVRVTLFCILAGIVLAMTAVVTDHWAVLSPHMEHHNTTCEAAHFGLWRICTKRIPMDDSKTCGPITLPGEKNCSYFRHFNPGESSEIFEFTTQKEYSISAAAIAIFSLGFIILGSLCVLLSLGKKRDYLLRPASMFYAFAGLCILVSVEVMRQSVKRMIDSEDTVWIEYYYSWSFACACAAFILLFLGGLALLLFSLPRMPRNPWESCMDAEPEH.

Residues 1–10 (MSQTKMLKVR) lie on the Cytoplasmic side of the membrane. A helical membrane pass occupies residues 11 to 29 (VTLFCILAGIVLAMTAVVT). Residues 30-108 (DHWAVLSPHM…TQKEYSISAA (79 aa)) are Extracellular-facing. N-linked (GlcNAc...) asparagine glycans are attached at residues asparagine 43 and asparagine 79. Cysteine 57 and cysteine 80 are oxidised to a cystine. A helical membrane pass occupies residues 109 to 129 (AIAIFSLGFIILGSLCVLLSL). Residues 130–134 (GKKRD) are Cytoplasmic-facing. Residues 135–155 (YLLRPASMFYAFAGLCILVSV) form a helical membrane-spanning segment. Topologically, residues 156 to 179 (EVMRQSVKRMIDSEDTVWIEYYYS) are extracellular. The helical transmembrane segment at 180–204 (WSFACACAAFILLFLGGLALLLFSL) threads the bilayer. Residues 205–222 (PRMPRNPWESCMDAEPEH) lie on the Cytoplasmic side of the membrane.

The protein belongs to the PMP-22/EMP/MP20 family. CACNG subfamily. As to quaternary structure, component of a calcium channel complex consisting of a pore-forming alpha subunit (CACNA1S) and the ancillary subunits CACNB1 or CACNB2, CACNG1 and CACNA2D1. The channel complex contains alpha, beta, gamma and delta subunits in a 1:1:1:1 ratio, i.e. it contains either CACNB1 or CACNB2. N-glycosylated. Skeletal muscle.

The protein resides in the cell membrane. Its subcellular location is the sarcolemma. Regulatory subunit of the voltage-gated calcium channel that gives rise to L-type calcium currents in skeletal muscle. Regulates channel inactivation kinetics. The protein is Voltage-dependent calcium channel gamma-1 subunit (CACNG1) of Homo sapiens (Human).